A 600-amino-acid polypeptide reads, in one-letter code: NADH-quinone oxidoreductase subunit C/D (600 aa).

Residues 1–190 are NADH dehydrogenase I subunit C; sequence MVNNMTDLTA…SPFELTKAKQ (190 aa). Residues 214 to 600 form an NADH dehydrogenase I subunit D region; that stretch reads DFMFLNLGPN…IDFVMSDVDR (387 aa).

In the N-terminal section; belongs to the complex I 30 kDa subunit family. This sequence in the C-terminal section; belongs to the complex I 49 kDa subunit family. As to quaternary structure, NDH-1 is composed of 13 different subunits. Subunits NuoB, CD, E, F, and G constitute the peripheral sector of the complex.

It is found in the cell inner membrane. The catalysed reaction is a quinone + NADH + 5 H(+)(in) = a quinol + NAD(+) + 4 H(+)(out). In terms of biological role, NDH-1 shuttles electrons from NADH, via FMN and iron-sulfur (Fe-S) centers, to quinones in the respiratory chain. The immediate electron acceptor for the enzyme in this species is believed to be ubiquinone. Couples the redox reaction to proton translocation (for every two electrons transferred, four hydrogen ions are translocated across the cytoplasmic membrane), and thus conserves the redox energy in a proton gradient. This is NADH-quinone oxidoreductase subunit C/D from Escherichia coli O157:H7.